Here is a 495-residue protein sequence, read N- to C-terminus: Iroquois-class homeodomain protein irx-4-B (495 aa).

A DNA-binding region (homeobox; TALE-type) is located at residues 141-203; that stretch reads GSTRRKNATR…NARRRLKKEN (63 aa). The segment at 203–245 is disordered; it reads NKMTWPPRNKCSDEKRPYDEEEEEEEDSQKATIKNEKKTVDEE. The span at 235–245 shows a compositional bias: basic and acidic residues; the sequence is IKNEKKTVDEE.

It belongs to the TALE/IRO homeobox family.

It localises to the nucleus. Acts partially redundantly with other irx members in neural patterning. Required for formation of the posterior forebrain, midbrain, hindbrain, and to a lesser extent, spinal cord. Patterns the neuroectoderm in both the anterior/posterior and dorsal/ventral axes. Does not appear to play a role in pronephros kidney development. This Xenopus laevis (African clawed frog) protein is Iroquois-class homeodomain protein irx-4-B (irx4-b).